Consider the following 397-residue polypeptide: Tyrosine aminotransferase (397 aa).

Substrate is bound by residues Gly-34, Tyr-66, Trp-131, and Asn-184. Position 247 is an N6-(pyridoxal phosphate)lysine (Lys-247). Arg-375 serves as a coordination point for substrate.

The protein belongs to the class-I pyridoxal-phosphate-dependent aminotransferase family. Homodimer. Pyridoxal 5'-phosphate serves as cofactor.

The catalysed reaction is L-tyrosine + 2-oxoglutarate = 3-(4-hydroxyphenyl)pyruvate + L-glutamate. The enzyme catalyses 4-methylsulfanyl-2-oxobutanoate + L-tyrosine = 3-(4-hydroxyphenyl)pyruvate + L-methionine. It catalyses the reaction an aromatic L-alpha-amino acid + 2-oxoglutarate = an aromatic oxo-acid + L-glutamate. It carries out the reaction L-aspartate + 2-oxoglutarate = oxaloacetate + L-glutamate. It functions in the pathway amino-acid biosynthesis; L-methionine biosynthesis via salvage pathway; L-methionine from S-methyl-5-thio-alpha-D-ribose 1-phosphate: step 6/6. With respect to regulation, inhibited by malate and nitrotyrosine by approximately 20% at the higher concentration. At 100 uM, canaline and carboxymethoxylamine inhibit aminotransferase activity by 35 and 70%, respectively. Addition of 1.0 mM carboxymethoxylamine lead to a complete inhibition of the aminotransferase activity. In terms of biological role, catalyzes the formation of methionine from 2-keto-4-methylthiobutyrate (KMTB) primarily using aromatic amino acids (tyrosine, phenylalanine and tryptophan) or glutamate as the amino donors. Histidine, leucine, asparagine, or arginine are also functional amino donors but to a lesser extent. Can also use alpha-ketoglutarate, oxaloacetate and pyruvate as the amino acceptors. This Klebsiella pneumoniae protein is Tyrosine aminotransferase (tyrB).